The following is a 346-amino-acid chain: uncharacterized protein (346 aa).

Residues 10–109 (WDFIMTDPSS…SNSNGNNSPV (100 aa)) form a disordered region. Residues 26–44 (KGSSKNGSPKTSSPKSGSP) are compositionally biased toward low complexity. A compositionally biased stretch (polar residues) spans 56 to 67 (NQQLLQNDSINL). Low complexity predominate over residues 94–109 (KSSVVPSNSNGNNSPV).

This is an uncharacterized protein from Dictyostelium discoideum (Social amoeba).